The sequence spans 107 residues: uncharacterized protein (107 aa).

Positions 6-107 (KARIDQLVTA…QEMLEVALAS (102 aa)) constitute a Glutaredoxin domain. Residue lysine 23 participates in glutathione binding. Cysteine 31 contributes to the [2Fe-2S] cluster binding site. Glutathione is bound by residues arginine 60 and 85 to 86 (SD).

It belongs to the glutaredoxin family. Monothiol subfamily.

This is an uncharacterized protein from Synechocystis sp. (strain ATCC 27184 / PCC 6803 / Kazusa).